Consider the following 346-residue polypeptide: Probable choline kinase 1 (346 aa).

Residues Arg-73, Gln-210, and Asp-227 each coordinate ATP.

The protein belongs to the choline/ethanolamine kinase family. As to expression, expressed in roots. Expressed at low levels in cauline leaves and flowers.

The enzyme catalyses choline + ATP = phosphocholine + ADP + H(+). Its pathway is phospholipid metabolism; phosphatidylcholine biosynthesis; phosphocholine from choline: step 1/1. Functionally, involved in phospholipid biosynthesis. Catalyzes the first step in phosphatidylcholine biosynthesis. The protein is Probable choline kinase 1 (CK1) of Arabidopsis thaliana (Mouse-ear cress).